The following is a 586-amino-acid chain: Glutathione hydrolase 5 proenzyme (586 aa).

The Cytoplasmic segment spans residues 1–8 (MARGYGAT). The chain crosses the membrane as a helical; Signal-anchor for type II membrane protein span at residues 9 to 29 (VSLVLLGLGLALAVIVLAVVL). The Extracellular portion of the chain corresponds to 30 to 586 (SRHQAPCGPQ…LRKSGEAAGY (557 aa)). An N-linked (GlcNAc...) asparagine glycan is attached at Asn98. Arg110 is a binding site for L-glutamate. Asn204, Asn303, and Asn347 each carry an N-linked (GlcNAc...) asparagine glycan. Thr388 (nucleophile) is an active-site residue. Residues Thr406, Glu427, and 469–470 (SS) each bind L-glutamate. N-linked (GlcNAc...) asparagine glycans are attached at residues Asn535 and Asn550.

The protein belongs to the gamma-glutamyltransferase family. As to quaternary structure, heterodimer composed of the light and heavy chains. The active site is located in the light chain. Post-translationally, cleaved by autocatalysis into a large and a small subunit. In terms of processing, glycosylated. As to expression, expressed in follicular dendritic cells in lymphoid follicles (at protein level).

Its subcellular location is the membrane. The catalysed reaction is glutathione + H2O = L-cysteinylglycine + L-glutamate. The enzyme catalyses an S-substituted glutathione + H2O = an S-substituted L-cysteinylglycine + L-glutamate. It carries out the reaction leukotriene C4 + H2O = leukotriene D4 + L-glutamate. It catalyses the reaction S-[(2E,6E,10E)-geranylgeranyl]-L-glutathione + H2O = S-[(2E,6E,10E)-geranylgeranyl]-L-cysteinylglycine + L-glutamate. The catalysed reaction is an N-terminal (5-L-glutamyl)-[peptide] + an alpha-amino acid = 5-L-glutamyl amino acid + an N-terminal L-alpha-aminoacyl-[peptide]. It participates in sulfur metabolism; glutathione metabolism. Its pathway is lipid metabolism; leukotriene D4 biosynthesis. Inhibited by serine-borate. Functionally, cleaves the gamma-glutamyl bond of extracellular glutathione tripeptide (gamma-Glu-Cys-Gly) and certain glutathione conjugates. Hydrolyzes glutathione releasing L-Glu and Cys-Gly dipeptide which is further metabolized to maintain extracellular cysteine levels but also to provide cysteine necessary for intracellular glutathione synthesis. Among glutathione-S-conjugates metabolizes leukotriene C4 (LTC4) and S-geranylgeranyl-glutathione (GGG), but is inactive toward gamma-glutamyl leucine. Converts extracellular LTC4 to LTD4 during acute inflammatory response. Acts as a negative regulator of GGG bioactivity. GGT5 (via GGG catabolism) and ABCC1 (via extracellular transport) establish GGG gradients within lymphoid tissues to position P2RY8-positive lymphocytes at germinal centers in lymphoid follicles and restrict their chemotactic transmigration from blood vessels to bone marrow parenchyma. The transpeptidation reaction, i.e. the transfer of gamma-glutamyl moiety to an acceptor molecule to yield a new gamma-glutamyl compound requires high concentration of dipeptide acceptor and is considered nonphysiological. The protein is Glutathione hydrolase 5 proenzyme (GGT5) of Homo sapiens (Human).